We begin with the raw amino-acid sequence, 748 residues long: Histone-lysine N-methyltransferase EZH2 (748 aa).

Over residues Tyr-184 to Asp-199 the composition is skewed to acidic residues. Disordered regions lie at residues Tyr-184 to Phe-220 and Ala-342 to Pro-428. Over residues Asp-200 to Phe-220 the composition is skewed to basic and acidic residues. A compositionally biased stretch (basic residues) spans Thr-347–Arg-359. Over residues Asn-362–Val-374 the composition is skewed to polar residues. The segment covering Glu-376–Gly-387 has biased composition (basic and acidic residues). Residues Cys-505–Ser-607 form the CXC domain. The region spanning Lys-614 to Arg-729 is the SET domain.

The protein belongs to the class V-like SAM-binding methyltransferase superfamily. Histone-lysine methyltransferase family. EZ subfamily. As to quaternary structure, component of the prc2/eed-ezh2 complex.

The protein localises to the nucleus. It catalyses the reaction L-lysyl(27)-[histone H3] + 3 S-adenosyl-L-methionine = N(6),N(6),N(6)-trimethyl-L-lysyl(27)-[histone H3] + 3 S-adenosyl-L-homocysteine + 3 H(+). In terms of biological role, polycomb group (PcG) protein. Catalytic subunit of the prc2/eed-ezh2 complex, which methylates 'Lys-9' and 'Lys-27' of histone H3, leading to transcriptional repression of the affected target gene. May repress transcription of the egr2 and en2 genes. May regulate the circadian clock via histone methylation at the promoter of the circadian genes. The chain is Histone-lysine N-methyltransferase EZH2 (ezh2-a) from Xenopus laevis (African clawed frog).